We begin with the raw amino-acid sequence, 183 residues long: Large ribosomal subunit protein uL5 (183 aa).

Belongs to the universal ribosomal protein uL5 family. As to quaternary structure, part of the 50S ribosomal subunit; part of the 5S rRNA/L5/L18/L25 subcomplex. Contacts the 5S rRNA and the P site tRNA. Forms a bridge to the 30S subunit in the 70S ribosome.

This is one of the proteins that bind and probably mediate the attachment of the 5S RNA into the large ribosomal subunit, where it forms part of the central protuberance. In the 70S ribosome it contacts protein S13 of the 30S subunit (bridge B1b), connecting the 2 subunits; this bridge is implicated in subunit movement. Contacts the P site tRNA; the 5S rRNA and some of its associated proteins might help stabilize positioning of ribosome-bound tRNAs. The polypeptide is Large ribosomal subunit protein uL5 (Chlorobaculum tepidum (strain ATCC 49652 / DSM 12025 / NBRC 103806 / TLS) (Chlorobium tepidum)).